We begin with the raw amino-acid sequence, 510 residues long: Inositol-3-phosphate synthase (510 aa).

Gly-70, Gly-71, Asn-72, Asn-73, Asp-143, Ile-180, Gln-190, Arg-193, Thr-230, Ala-231, Asn-232, Thr-233, Gly-281, Ser-282, Asp-306, Ser-309, Asn-340, Asn-341, Asp-342, Lys-355, Gly-393, Asp-394, Asp-422, and Ser-423 together coordinate NAD(+).

It belongs to the myo-inositol 1-phosphate synthase family. Requires NAD(+) as cofactor.

It is found in the cytoplasm. It localises to the cytosol. Its subcellular location is the nucleus. The catalysed reaction is D-glucose 6-phosphate = 1D-myo-inositol 3-phosphate. It participates in polyol metabolism; myo-inositol biosynthesis; myo-inositol from D-glucose 6-phosphate: step 1/2. In terms of biological role, key enzyme in myo-inositol biosynthesis pathway that catalyzes the conversion of glucose 6-phosphate to 1-myo-inositol 1-phosphate in a NAD-dependent manner. The sequence is that of Inositol-3-phosphate synthase (TUR1) from Spirodela polyrhiza (Giant duckweed).